A 157-amino-acid chain; its full sequence is Protein AE7 (157 aa).

The protein belongs to the MIP18 family. Part of a complex formed of AE7, CIA1, MMS19 and NAR1. Interacts with CIA1 and MMS19, but not with NAR1. In terms of tissue distribution, expressed in the embryo, shoot apical meristem, leaf primordia, inflorescence and all floral organs.

The protein resides in the nucleus. The protein localises to the cytoplasm. Functionally, central member of the cytosolic iron-sulfur (Fe-S) protein assembly (CIA) pathway. Involved in leaf polarity formation. Promotes leaf adaxial identity. May play a role in the cell cycle progression and is required for cell proliferation. The sequence is that of Protein AE7 from Arabidopsis thaliana (Mouse-ear cress).